The primary structure comprises 384 residues: Outer membrane protein assembly factor BamB (384 aa).

Residues 1–16 form the signal peptide; sequence MKIRILVLILCALTQG. C17 carries the N-palmitoyl cysteine lipid modification. Residue C17 is the site of S-diacylglycerol cysteine attachment.

The protein belongs to the BamB family. In terms of assembly, part of the Bam complex.

It is found in the cell outer membrane. In terms of biological role, part of the outer membrane protein assembly complex, which is involved in assembly and insertion of beta-barrel proteins into the outer membrane. This Legionella pneumophila (strain Paris) protein is Outer membrane protein assembly factor BamB.